Consider the following 447-residue polypeptide: Glycerol-3-phosphate acyltransferase ATS11, chloroplastic (447 aa).

Residues 1 to 21 are disordered; that stretch reads MFILSSSSSLPSPLSLSSSRV. A chloroplast-targeting transit peptide spans 1–48; that stretch reads MFILSSSSSLPSPLSLSSSRVSLPPPSSSSLNLLPLSPHFQPPNLACS. An HXXXXD motif motif is present at residues 217-222; that stretch reads HQTEAD.

It belongs to the GPAT/DAPAT family.

It localises to the plastid. Its subcellular location is the chloroplast stroma. It carries out the reaction a fatty acyl-[ACP] + sn-glycerol 3-phosphate = a 1-acyl-sn-glycero-3-phosphate + holo-[ACP]. The catalysed reaction is sn-glycerol 3-phosphate + an acyl-CoA = a 1-acyl-sn-glycero-3-phosphate + CoA. It functions in the pathway phospholipid metabolism; CDP-diacylglycerol biosynthesis; CDP-diacylglycerol from sn-glycerol 3-phosphate: step 1/3. Its function is as follows. Esterifies the acyl-group from acyl-acyl carrier proteins (acyl-ACPs) to the sn-1 position of glycerol-3-phosphate. The physiological acyl donors in chloroplasts are acyl-ACPs, but acyl-CoAs are used as artificial donor for in vitro reactions. The enzyme from chilling-resistant plants discriminates against non-fluid palmitic acid and selects oleic acid whereas the enzyme from sensitive plants accepts both fatty acids. Squash is chilling-sensitive. Preferably utilizes oleoyl groups (18:1-ACP) and has lower affinity to palmitoyl (16:0-ACP) and stearoyl groups (18:0-ACP). The protein is Glycerol-3-phosphate acyltransferase ATS11, chloroplastic of Cucurbita moschata (Winter crookneck squash).